The primary structure comprises 631 residues: Chaperone protein DnaK (631 aa).

At threonine 198 the chain carries Phosphothreonine; by autocatalysis. A disordered region spans residues 598–631 (YSAQQGGEQPGAAKKDDVVDAEFTEVDDDKKKSA).

It belongs to the heat shock protein 70 family.

Its function is as follows. Acts as a chaperone. In Azorhizobium caulinodans (strain ATCC 43989 / DSM 5975 / JCM 20966 / LMG 6465 / NBRC 14845 / NCIMB 13405 / ORS 571), this protein is Chaperone protein DnaK.